The chain runs to 1758 residues: Y' element ATP-dependent helicase YIL177C (1758 aa).

One can recognise a Helicase ATP-binding domain in the interval 668–845 (EIYMADTPSV…LQRIGLTGLA (178 aa)). 681–688 (APPGYGKT) provides a ligand contact to ATP. Residues 900-1051 (ALKLLLALFE…EFYGLESKKG (152 aa)) enclose the Helicase C-terminal domain. Low complexity predominate over residues 1142–1360 (NVRTNATTNA…ATTTESTNAS (219 aa)). The tract at residues 1142–1384 (NVRTNATTNA…RFHPVTDINK (243 aa)) is disordered. The span at 1361–1384 (AKEDANKDGNAEDNRFHPVTDINK) shows a compositional bias: basic and acidic residues.

It belongs to the helicase family. Yeast subtelomeric Y' repeat subfamily.

Catalyzes DNA unwinding and is involved in telomerase-independent telomere maintenance. This Saccharomyces cerevisiae (strain ATCC 204508 / S288c) (Baker's yeast) protein is Y' element ATP-dependent helicase YIL177C.